The sequence spans 695 residues: Elongation factor G (695 aa).

Residues 9 to 283 (EKIRNIGIVA…AVIDYLPSPL (275 aa)) form the tr-type G domain. GTP is bound by residues 18 to 25 (AHIDAGKT), 82 to 86 (DTPGH), and 136 to 139 (NKMD).

Belongs to the TRAFAC class translation factor GTPase superfamily. Classic translation factor GTPase family. EF-G/EF-2 subfamily.

Its subcellular location is the cytoplasm. In terms of biological role, catalyzes the GTP-dependent ribosomal translocation step during translation elongation. During this step, the ribosome changes from the pre-translocational (PRE) to the post-translocational (POST) state as the newly formed A-site-bound peptidyl-tRNA and P-site-bound deacylated tRNA move to the P and E sites, respectively. Catalyzes the coordinated movement of the two tRNA molecules, the mRNA and conformational changes in the ribosome. This chain is Elongation factor G, found in Petrotoga mobilis (strain DSM 10674 / SJ95).